Here is a 194-residue protein sequence, read N- to C-terminus: Orotate phosphoribosyltransferase (194 aa).

117-125 (EDIVSTGLS) is a 5-phospho-alpha-D-ribose 1-diphosphate binding site. Residues Ser-121 and Arg-149 each contribute to the orotate site.

The protein belongs to the purine/pyrimidine phosphoribosyltransferase family. PyrE subfamily. In terms of assembly, homodimer. The cofactor is Mg(2+).

The catalysed reaction is orotidine 5'-phosphate + diphosphate = orotate + 5-phospho-alpha-D-ribose 1-diphosphate. The protein operates within pyrimidine metabolism; UMP biosynthesis via de novo pathway; UMP from orotate: step 1/2. Catalyzes the transfer of a ribosyl phosphate group from 5-phosphoribose 1-diphosphate to orotate, leading to the formation of orotidine monophosphate (OMP). The chain is Orotate phosphoribosyltransferase from Maricaulis maris (strain MCS10) (Caulobacter maris).